The following is a 494-amino-acid chain: Apolipoprotein N-acyltransferase (494 aa).

6 consecutive transmembrane segments (helical) span residues 16–36, 41–61, 62–82, 133–153, 173–193, and 202–222; these read TVGG…FIWI, LWAS…AILL, SYRW…IAFS, LIWG…FGLG, GGLA…IFAF, and LFAL…ILLA. In terms of domain architecture, CN hydrolase spans 235–461; the sequence is WQTNIPTRQK…EGVGVIDINV (227 aa). Glu276 serves as the catalytic Proton acceptor. The active site involves Lys325. Cys373 (nucleophile) is an active-site residue. Residues 468–488 traverse the membrane as a helical segment; that stretch reads YVRWGEIPLISSLLIVLCFIA.

Belongs to the CN hydrolase family. Apolipoprotein N-acyltransferase subfamily.

The protein localises to the cell inner membrane. The catalysed reaction is N-terminal S-1,2-diacyl-sn-glyceryl-L-cysteinyl-[lipoprotein] + a glycerophospholipid = N-acyl-S-1,2-diacyl-sn-glyceryl-L-cysteinyl-[lipoprotein] + a 2-acyl-sn-glycero-3-phospholipid + H(+). The protein operates within protein modification; lipoprotein biosynthesis (N-acyl transfer). Functionally, catalyzes the phospholipid dependent N-acylation of the N-terminal cysteine of apolipoprotein, the last step in lipoprotein maturation. This chain is Apolipoprotein N-acyltransferase, found in Prochlorococcus marinus (strain SARG / CCMP1375 / SS120).